The primary structure comprises 642 residues: Kinesin-like protein KIN-7L (642 aa).

Positions 3–337 constitute a Kinesin motor domain; that stretch reads KISVAVRFRP…LQFASRAKCV (335 aa). Over residues 12-27 the composition is skewed to low complexity; sequence PPTTAAPAADQSPSST. A disordered region spans residues 12–33; sequence PPTTAAPAADQSPSSTGGDREW. 94–101 serves as a coordination point for ATP; the sequence is GQTSSGKT. 2 coiled-coil regions span residues 343–428 and 540–612; these read VNEI…SNTS and RQQL…FSQA.

Belongs to the TRAFAC class myosin-kinesin ATPase superfamily. Kinesin family. KIN-7 subfamily.

The polypeptide is Kinesin-like protein KIN-7L (Oryza sativa subsp. japonica (Rice)).